The sequence spans 168 residues: Probable chemoreceptor glutamine deamidase CheD 2 (168 aa).

Belongs to the CheD family.

It catalyses the reaction L-glutaminyl-[protein] + H2O = L-glutamyl-[protein] + NH4(+). Its function is as follows. Probably deamidates glutamine residues to glutamate on methyl-accepting chemotaxis receptors (MCPs), playing an important role in chemotaxis. This is Probable chemoreceptor glutamine deamidase CheD 2 from Leptospira interrogans serogroup Icterohaemorrhagiae serovar copenhageni (strain Fiocruz L1-130).